We begin with the raw amino-acid sequence, 497 residues long: Cysteine--tRNA ligase (497 aa).

Residue Cys34 coordinates Zn(2+). The 'HIGH' region signature appears at 36-46 (PTVYDFAHIGN). Residues Cys243, His268, and Glu272 each coordinate Zn(2+). The 'KMSKS' region motif lies at 301–305 (KMAKS). An ATP-binding site is contributed by Lys304. Positions 478–497 (LMDYKDPETGERRTKWEVKR) are disordered. The segment covering 480–497 (DYKDPETGERRTKWEVKR) has biased composition (basic and acidic residues).

This sequence belongs to the class-I aminoacyl-tRNA synthetase family. As to quaternary structure, monomer. It depends on Zn(2+) as a cofactor.

It is found in the cytoplasm. The enzyme catalyses tRNA(Cys) + L-cysteine + ATP = L-cysteinyl-tRNA(Cys) + AMP + diphosphate. This chain is Cysteine--tRNA ligase, found in Chelativorans sp. (strain BNC1).